A 514-amino-acid chain; its full sequence is 2,3-bisphosphoglycerate-independent phosphoglycerate mutase (514 aa).

Mn(2+) contacts are provided by Asp-14 and Ser-64. Ser-64 (phosphoserine intermediate) is an active-site residue. Residues His-125, 155-156, Arg-187, Arg-193, 263-266, and Lys-336 contribute to the substrate site; these read RD and RADR. Mn(2+) is bound by residues Asp-403, His-407, Asp-444, His-445, and His-463.

Belongs to the BPG-independent phosphoglycerate mutase family. Monomer. Mn(2+) serves as cofactor.

The enzyme catalyses (2R)-2-phosphoglycerate = (2R)-3-phosphoglycerate. The protein operates within carbohydrate degradation; glycolysis; pyruvate from D-glyceraldehyde 3-phosphate: step 3/5. Functionally, catalyzes the interconversion of 2-phosphoglycerate and 3-phosphoglycerate. This is 2,3-bisphosphoglycerate-independent phosphoglycerate mutase from Enterobacter sp. (strain 638).